The primary structure comprises 367 residues: UDP-N-acetylglucosamine--N-acetylmuramyl-(pentapeptide) pyrophosphoryl-undecaprenol N-acetylglucosamine transferase (367 aa).

UDP-N-acetyl-alpha-D-glucosamine is bound by residues 22 to 24, N134, R170, S198, I253, and Q298; that span reads TGG.

The protein belongs to the glycosyltransferase 28 family. MurG subfamily.

It is found in the cell inner membrane. The enzyme catalyses di-trans,octa-cis-undecaprenyl diphospho-N-acetyl-alpha-D-muramoyl-L-alanyl-D-glutamyl-meso-2,6-diaminopimeloyl-D-alanyl-D-alanine + UDP-N-acetyl-alpha-D-glucosamine = di-trans,octa-cis-undecaprenyl diphospho-[N-acetyl-alpha-D-glucosaminyl-(1-&gt;4)]-N-acetyl-alpha-D-muramoyl-L-alanyl-D-glutamyl-meso-2,6-diaminopimeloyl-D-alanyl-D-alanine + UDP + H(+). The protein operates within cell wall biogenesis; peptidoglycan biosynthesis. Its function is as follows. Cell wall formation. Catalyzes the transfer of a GlcNAc subunit on undecaprenyl-pyrophosphoryl-MurNAc-pentapeptide (lipid intermediate I) to form undecaprenyl-pyrophosphoryl-MurNAc-(pentapeptide)GlcNAc (lipid intermediate II). This Xylella fastidiosa (strain M23) protein is UDP-N-acetylglucosamine--N-acetylmuramyl-(pentapeptide) pyrophosphoryl-undecaprenol N-acetylglucosamine transferase.